The chain runs to 336 residues: Toluate 1,2-dioxygenase electron transfer component (336 aa).

The 2Fe-2S ferredoxin-type domain occupies 3 to 97 (HKVATDFEDG…DCVIRVPAAS (95 aa)). [2Fe-2S] cluster contacts are provided by Cys-40, Cys-45, Cys-48, and Cys-81. The ferredoxin-reductase stretch occupies residues 99–336 (VCKTQQAGYQ…FYYEKFAASA (238 aa)). An FAD-binding FR-type domain is found at 104 to 204 (QAGYQAAISN…AGPLGAFYLR (101 aa)).

It belongs to the bacterial ring-hydroxylating dioxygenase ferredoxin reductase family. As to quaternary structure, this dioxygenase system consists of three proteins: the two subunits of the hydroxylase component (XylX and XylY), and an electron transfer component (XylZ). It depends on FAD as a cofactor. [2Fe-2S] cluster is required as a cofactor.

It catalyses the reaction 2 reduced [2Fe-2S]-[ferredoxin] + NAD(+) + H(+) = 2 oxidized [2Fe-2S]-[ferredoxin] + NADH. Functionally, electron transfer component of toluate 1,2-dioxygenase system. The protein is Toluate 1,2-dioxygenase electron transfer component (xylZ) of Pseudomonas putida (Arthrobacter siderocapsulatus).